The primary structure comprises 519 residues: U3 small nucleolar RNA-associated protein 15 homolog (519 aa).

Alanine 2 is modified (N-acetylalanine). WD repeat units lie at residues lysine 36–threonine 75, arginine 78–glutamine 117, glycine 120–threonine 159, glutamate 162–serine 202, glutamate 204–valine 242, asparagine 246–serine 285, and aspartate 287–serine 326. Lysine 249 is covalently cross-linked (Glycyl lysine isopeptide (Lys-Gly) (interchain with G-Cter in SUMO2)).

In terms of assembly, part of the small subunit (SSU) processome, composed of more than 70 proteins and the RNA chaperone small nucleolar RNA (snoRNA) U3. May be a component of the proposed t-UTP subcomplex of the ribosomal small subunit (SSU) processome containing at least UTP4, WDR43, HEATR1, UTP15, WDR75. Interacts directly with UTP4 and WDR43.

The protein resides in the nucleus. It is found in the nucleolus. Its function is as follows. Ribosome biogenesis factor. Involved in nucleolar processing of pre-18S ribosomal RNA. Required for optimal pre-ribosomal RNA transcription by RNA polymerase I. Part of the small subunit (SSU) processome, first precursor of the small eukaryotic ribosomal subunit. During the assembly of the SSU processome in the nucleolus, many ribosome biogenesis factors, an RNA chaperone and ribosomal proteins associate with the nascent pre-rRNA and work in concert to generate RNA folding, modifications, rearrangements and cleavage as well as targeted degradation of pre-ribosomal RNA by the RNA exosome. The chain is U3 small nucleolar RNA-associated protein 15 homolog from Bos taurus (Bovine).